The chain runs to 64 residues: MAHPSQLGFQDAASPVMEELXHFHDHTLMIVFLISTLVXYIIVAMVSTKLTNKYVLDSQEIEIV.

Over 1 to 14 (MAHPSQLGFQDAAS) the chain is Mitochondrial intermembrane. The chain crosses the membrane as a helical span at residues 15–45 (PVMEELXHFHDHTLMIVFLISTLVXYIIVAM). Over 46–64 (VSTKLTNKYVLDSQEIEIV) the chain is Mitochondrial matrix.

This sequence belongs to the cytochrome c oxidase subunit 2 family. Component of the cytochrome c oxidase (complex IV, CIV), a multisubunit enzyme composed of 14 subunits. The complex is composed of a catalytic core of 3 subunits MT-CO1, MT-CO2 and MT-CO3, encoded in the mitochondrial DNA, and 11 supernumerary subunits COX4I, COX5A, COX5B, COX6A, COX6B, COX6C, COX7A, COX7B, COX7C, COX8 and NDUFA4, which are encoded in the nuclear genome. The complex exists as a monomer or a dimer and forms supercomplexes (SCs) in the inner mitochondrial membrane with NADH-ubiquinone oxidoreductase (complex I, CI) and ubiquinol-cytochrome c oxidoreductase (cytochrome b-c1 complex, complex III, CIII), resulting in different assemblies (supercomplex SCI(1)III(2)IV(1) and megacomplex MCI(2)III(2)IV(2)). Found in a complex with TMEM177, COA6, COX18, COX20, SCO1 and SCO2. Interacts with TMEM177 in a COX20-dependent manner. Interacts with COX20. Interacts with COX16. Requires Cu cation as cofactor.

It is found in the mitochondrion inner membrane. It catalyses the reaction 4 Fe(II)-[cytochrome c] + O2 + 8 H(+)(in) = 4 Fe(III)-[cytochrome c] + 2 H2O + 4 H(+)(out). Functionally, component of the cytochrome c oxidase, the last enzyme in the mitochondrial electron transport chain which drives oxidative phosphorylation. The respiratory chain contains 3 multisubunit complexes succinate dehydrogenase (complex II, CII), ubiquinol-cytochrome c oxidoreductase (cytochrome b-c1 complex, complex III, CIII) and cytochrome c oxidase (complex IV, CIV), that cooperate to transfer electrons derived from NADH and succinate to molecular oxygen, creating an electrochemical gradient over the inner membrane that drives transmembrane transport and the ATP synthase. Cytochrome c oxidase is the component of the respiratory chain that catalyzes the reduction of oxygen to water. Electrons originating from reduced cytochrome c in the intermembrane space (IMS) are transferred via the dinuclear copper A center (CU(A)) of subunit 2 and heme A of subunit 1 to the active site in subunit 1, a binuclear center (BNC) formed by heme A3 and copper B (CU(B)). The BNC reduces molecular oxygen to 2 water molecules using 4 electrons from cytochrome c in the IMS and 4 protons from the mitochondrial matrix. The polypeptide is Cytochrome c oxidase subunit 2 (mt-co2) (Scaphirhynchus platorynchus (Shovelnose sturgeon)).